The sequence spans 278 residues: Large ribosomal subunit protein uL2 (278 aa).

Residues Gly-223 to Lys-278 form a disordered region.

This sequence belongs to the universal ribosomal protein uL2 family. As to quaternary structure, part of the 50S ribosomal subunit. Forms a bridge to the 30S subunit in the 70S ribosome.

Functionally, one of the primary rRNA binding proteins. Required for association of the 30S and 50S subunits to form the 70S ribosome, for tRNA binding and peptide bond formation. It has been suggested to have peptidyltransferase activity; this is somewhat controversial. Makes several contacts with the 16S rRNA in the 70S ribosome. The sequence is that of Large ribosomal subunit protein uL2 from Methylobacterium sp. (strain 4-46).